A 413-amino-acid chain; its full sequence is Histidinol-phosphate aminotransferase, chloroplastic (413 aa).

Residues 1–35 constitute a chloroplast transit peptide; that stretch reads MGVIELCNTSSICIGRANPSCCSIERNQRRRIICM. Lys273 carries the N6-(pyridoxal phosphate)lysine modification.

Belongs to the class-II pyridoxal-phosphate-dependent aminotransferase family. Histidinol-phosphate aminotransferase subfamily. As to quaternary structure, homodimer. The cofactor is pyridoxal 5'-phosphate. Expressed in flowers, leaves, stems and roots.

It is found in the plastid. It localises to the chloroplast. The catalysed reaction is L-histidinol phosphate + 2-oxoglutarate = 3-(imidazol-4-yl)-2-oxopropyl phosphate + L-glutamate. It functions in the pathway amino-acid biosynthesis; L-histidine biosynthesis; L-histidine from 5-phospho-alpha-D-ribose 1-diphosphate: step 7/9. In Nicotiana plumbaginifolia (Leadwort-leaved tobacco), this protein is Histidinol-phosphate aminotransferase, chloroplastic (HPA).